Here is a 456-residue protein sequence, read N- to C-terminus: Bifunctional protein GlmU (456 aa).

The pyrophosphorylase stretch occupies residues 1-229 (MLNNAMSVVI…LSEVEGVNNR (229 aa)). Residues 11–14 (LAAG), K25, Q76, 81–82 (GT), 103–105 (YGD), G140, E154, N169, and N227 contribute to the UDP-N-acetyl-alpha-D-glucosamine site. Position 105 (D105) interacts with Mg(2+). Position 227 (N227) interacts with Mg(2+). A linker region spans residues 230 to 250 (LQLSRLERVYQSEQAEKLLLA). The N-acetyltransferase stretch occupies residues 251–456 (GVMLRDPARF…EGWRRPVKKK (206 aa)). R333 and K351 together coordinate UDP-N-acetyl-alpha-D-glucosamine. The active-site Proton acceptor is the H363. 2 residues coordinate UDP-N-acetyl-alpha-D-glucosamine: Y366 and N377. Acetyl-CoA contacts are provided by residues A380, 386–387 (NY), S405, A423, and R440.

The protein in the N-terminal section; belongs to the N-acetylglucosamine-1-phosphate uridyltransferase family. In the C-terminal section; belongs to the transferase hexapeptide repeat family. In terms of assembly, homotrimer. Mg(2+) serves as cofactor.

Its subcellular location is the cytoplasm. It carries out the reaction alpha-D-glucosamine 1-phosphate + acetyl-CoA = N-acetyl-alpha-D-glucosamine 1-phosphate + CoA + H(+). The enzyme catalyses N-acetyl-alpha-D-glucosamine 1-phosphate + UTP + H(+) = UDP-N-acetyl-alpha-D-glucosamine + diphosphate. It participates in nucleotide-sugar biosynthesis; UDP-N-acetyl-alpha-D-glucosamine biosynthesis; N-acetyl-alpha-D-glucosamine 1-phosphate from alpha-D-glucosamine 6-phosphate (route II): step 2/2. The protein operates within nucleotide-sugar biosynthesis; UDP-N-acetyl-alpha-D-glucosamine biosynthesis; UDP-N-acetyl-alpha-D-glucosamine from N-acetyl-alpha-D-glucosamine 1-phosphate: step 1/1. It functions in the pathway bacterial outer membrane biogenesis; LPS lipid A biosynthesis. Catalyzes the last two sequential reactions in the de novo biosynthetic pathway for UDP-N-acetylglucosamine (UDP-GlcNAc). The C-terminal domain catalyzes the transfer of acetyl group from acetyl coenzyme A to glucosamine-1-phosphate (GlcN-1-P) to produce N-acetylglucosamine-1-phosphate (GlcNAc-1-P), which is converted into UDP-GlcNAc by the transfer of uridine 5-monophosphate (from uridine 5-triphosphate), a reaction catalyzed by the N-terminal domain. The polypeptide is Bifunctional protein GlmU (Escherichia coli O127:H6 (strain E2348/69 / EPEC)).